The sequence spans 286 residues: Polyamine aminopropyltransferase (286 aa).

Residues 5–238 (PLWHETLHDH…GIMTFAWASD (234 aa)) form the PABS domain. Residue Gln-33 participates in S-methyl-5'-thioadenosine binding. Positions 64 and 88 each coordinate spermidine. S-methyl-5'-thioadenosine contacts are provided by residues Glu-108 and 140 to 141 (DG). The Proton acceptor role is filled by Asp-158. 158–161 (DCTD) is a spermidine binding site. An S-methyl-5'-thioadenosine-binding site is contributed by Pro-165.

Belongs to the spermidine/spermine synthase family. Homodimer or homotetramer.

It is found in the cytoplasm. The enzyme catalyses S-adenosyl 3-(methylsulfanyl)propylamine + putrescine = S-methyl-5'-thioadenosine + spermidine + H(+). It participates in amine and polyamine biosynthesis; spermidine biosynthesis; spermidine from putrescine: step 1/1. Its function is as follows. Catalyzes the irreversible transfer of a propylamine group from the amino donor S-adenosylmethioninamine (decarboxy-AdoMet) to putrescine (1,4-diaminobutane) to yield spermidine. This chain is Polyamine aminopropyltransferase, found in Klebsiella pneumoniae (strain 342).